Consider the following 258-residue polypeptide: Hydroxyacylglutathione hydrolase (258 aa).

Positions 54, 56, 58, 59, 113, 138, and 176 each coordinate Zn(2+).

Belongs to the metallo-beta-lactamase superfamily. Glyoxalase II family. Monomer. Requires Zn(2+) as cofactor.

The enzyme catalyses an S-(2-hydroxyacyl)glutathione + H2O = a 2-hydroxy carboxylate + glutathione + H(+). It functions in the pathway secondary metabolite metabolism; methylglyoxal degradation; (R)-lactate from methylglyoxal: step 2/2. Its function is as follows. Thiolesterase that catalyzes the hydrolysis of S-D-lactoyl-glutathione to form glutathione and D-lactic acid. The chain is Hydroxyacylglutathione hydrolase from Synechococcus sp. (strain ATCC 27144 / PCC 6301 / SAUG 1402/1) (Anacystis nidulans).